The primary structure comprises 320 residues: Glyoxylate/hydroxypyruvate reductase B (320 aa).

Catalysis depends on residues Arg233 and Glu262. His281 serves as the catalytic Proton donor.

The protein belongs to the D-isomer specific 2-hydroxyacid dehydrogenase family. GhrB subfamily. In terms of assembly, homodimer.

It localises to the cytoplasm. It catalyses the reaction glycolate + NADP(+) = glyoxylate + NADPH + H(+). It carries out the reaction (R)-glycerate + NAD(+) = 3-hydroxypyruvate + NADH + H(+). The catalysed reaction is (R)-glycerate + NADP(+) = 3-hydroxypyruvate + NADPH + H(+). Its function is as follows. Catalyzes the NADPH-dependent reduction of glyoxylate and hydroxypyruvate into glycolate and glycerate, respectively. In Pectobacterium carotovorum subsp. carotovorum (strain PC1), this protein is Glyoxylate/hydroxypyruvate reductase B.